Here is a 101-residue protein sequence, read N- to C-terminus: uncharacterized protein (101 aa).

A helical transmembrane segment spans residues 13–33 (FISIMCLFSIPLCFSLSIFFF).

It localises to the membrane. This is an uncharacterized protein from Schizosaccharomyces pombe (strain 972 / ATCC 24843) (Fission yeast).